A 192-amino-acid chain; its full sequence is Fe/S biogenesis protein NfuA (192 aa).

Residues Cys149 and Cys152 each coordinate [4Fe-4S] cluster.

The protein belongs to the NfuA family. Homodimer. [4Fe-4S] cluster serves as cofactor.

Functionally, involved in iron-sulfur cluster biogenesis. Binds a 4Fe-4S cluster, can transfer this cluster to apoproteins, and thereby intervenes in the maturation of Fe/S proteins. Could also act as a scaffold/chaperone for damaged Fe/S proteins. The polypeptide is Fe/S biogenesis protein NfuA (Shewanella halifaxensis (strain HAW-EB4)).